The primary structure comprises 446 residues: Low-affinity gluconate transporter (446 aa).

Met1 is a topological domain (cytoplasmic). Residues 2–22 (TTLTLVLTAVGSVLLLLFLVM) form a helical membrane-spanning segment. Residues 23–26 (KARM) are Periplasmic-facing. The chain crosses the membrane as a helical span at residues 27 to 47 (HAFLALMVVSMGAGLFSGMPL). The Cytoplasmic portion of the chain corresponds to 48-58 (DKIAATMEKGM). A helical transmembrane segment spans residues 59–79 (GGTLGFLAVVVALGAMFGKIL). Over 80 to 109 (HETGAVDQIAVKMLKSFGHSRAHYAIGLAG) the chain is Periplasmic. A helical membrane pass occupies residues 110-130 (LVCALPLFFEVAIVLLISVAF). Topologically, residues 131-142 (SMARHTGTNLVK) are cytoplasmic. A helical transmembrane segment spans residues 143-163 (LVIPLFAGVAAAAAFLVPGPA). The Periplasmic segment spans residues 164–176 (PMLLASQMNADFG). The helical transmembrane segment at 177-197 (WMILIGLCAAIPGMIIAGPLW) threads the bilayer. Topologically, residues 198–225 (GNFISRYVELHIPDDISEPHLGEGKMPS) are cytoplasmic. Residues 226–246 (FGFSLSLILLPLVLVGLKTIA) form a helical membrane-spanning segment. At 247 to 261 (ARFVPEGSTAYEWFE) the chain is on the periplasmic side. A helical membrane pass occupies residues 262-282 (FIGHPFTAILVACLVAIYGLA). The Cytoplasmic segment spans residues 283 to 294 (MRQGMPKDKVME). Residues 295–315 (ICGHALQPAGIILLVIGAGGV) traverse the membrane as a helical segment. The Periplasmic segment spans residues 316–330 (FKQVLVDSGVGPALG). Residues 331–351 (EALTGMGLPIAITCFVLAAAV) form a helical membrane-spanning segment. Residue Arg352 is a topological domain, cytoplasmic. A helical transmembrane segment spans residues 353–373 (IIQGSATVACLTAVGLVMPVI). The Periplasmic segment spans residues 374–387 (EQLNYSGAQMAALS). The helical transmembrane segment at 388–408 (ICIAGGSIVVSHVNDAGFWLF) threads the bilayer. The Cytoplasmic portion of the chain corresponds to 409 to 424 (GKFTGATEAETLKTWT). A helical membrane pass occupies residues 425 to 445 (MMETILGTVGAIVGMIAFQLL). Residue Ser446 is a topological domain, periplasmic.

This sequence belongs to the GntP permease family.

Its subcellular location is the cell inner membrane. Functionally, part of the gluconate utilization system Gnt-I; low-affinity intake of gluconate. This is Low-affinity gluconate transporter (gntU) from Escherichia coli O157:H7.